A 902-amino-acid polypeptide reads, in one-letter code: HTH-type transcriptional regulator MalT (902 aa).

39–46 (SPAGYGKT) is a binding site for ATP. The region spanning 832–897 (ELVRTSPLTQ…EAIVTAENLL (66 aa)) is the HTH luxR-type domain. Residues 856 to 875 (NEQIAQELDVAGTTIKTHIR) constitute a DNA-binding region (H-T-H motif).

It belongs to the MalT family. Monomer in solution. Oligomerizes to an active state in the presence of the positive effectors ATP and maltotriose.

Activated by ATP and maltotriose, which are both required for DNA binding. Functionally, positively regulates the transcription of the maltose regulon whose gene products are responsible for uptake and catabolism of malto-oligosaccharides. Specifically binds to the promoter region of its target genes, recognizing a short DNA motif called the MalT box. The chain is HTH-type transcriptional regulator MalT from Vibrio parahaemolyticus serotype O3:K6 (strain RIMD 2210633).